The primary structure comprises 667 residues: UvrABC system protein B (667 aa).

The Helicase ATP-binding domain maps to 25 to 180 (DSLQNQHRFQ…LLRALVSVQY (156 aa)). Residue 38–45 (GATGTGKT) coordinates ATP. The short motif at 91 to 114 (YYDYYQPEAYIPVSDTYIEKSSSI) is the Beta-hairpin element. The Helicase C-terminal domain occupies 429–595 (QVDDLLGEIK…PIVKRSSNSI (167 aa)). Residues 626–661 (PELIQQLEAQMKEAAKNLEFESAAKYRDRIKQLRDK) enclose the UVR domain.

The protein belongs to the UvrB family. In terms of assembly, forms a heterotetramer with UvrA during the search for lesions. Interacts with UvrC in an incision complex.

The protein localises to the cytoplasm. Functionally, the UvrABC repair system catalyzes the recognition and processing of DNA lesions. A damage recognition complex composed of 2 UvrA and 2 UvrB subunits scans DNA for abnormalities. Upon binding of the UvrA(2)B(2) complex to a putative damaged site, the DNA wraps around one UvrB monomer. DNA wrap is dependent on ATP binding by UvrB and probably causes local melting of the DNA helix, facilitating insertion of UvrB beta-hairpin between the DNA strands. Then UvrB probes one DNA strand for the presence of a lesion. If a lesion is found the UvrA subunits dissociate and the UvrB-DNA preincision complex is formed. This complex is subsequently bound by UvrC and the second UvrB is released. If no lesion is found, the DNA wraps around the other UvrB subunit that will check the other stand for damage. The chain is UvrABC system protein B from Microcystis aeruginosa (strain NIES-843 / IAM M-2473).